Consider the following 1197-residue polypeptide: DExH-box ATP-dependent RNA helicase DExH3 (1197 aa).

The Helicase ATP-binding domain maps to 309 to 476; the sequence is LKAIAANQVV…FGGAPAMHIP (168 aa). 322-329 is a binding site for ATP; it reads GETGCGKT. The DEIH box motif lies at 423–426; it reads DEIH. A Helicase C-terminal domain is found at 564–738; the sequence is LIENVLCHIV…SLCLQIKSLG (175 aa).

The protein belongs to the DExH box helicase family.

It catalyses the reaction ATP + H2O = ADP + phosphate + H(+). The sequence is that of DExH-box ATP-dependent RNA helicase DExH3 from Arabidopsis thaliana (Mouse-ear cress).